A 1150-amino-acid chain; its full sequence is Serine/threonine-protein phosphatase 2A regulatory subunit B'' subunit alpha (1150 aa).

The tract at residues 661-693 is disordered; it reads PEVIKIQNKPEKKPGTPLPPPATSPSSPRPLSP. The span at 676–693 shows a compositional bias: pro residues; the sequence is TPLPPPATSPSSPRPLSP. 2 EF-hand domains span residues 758–793 and 972–1007; these read CPLYWKAPMFRAAGGEKTGFVTAQSFIAMWRKLLNN and RNPTSIEYWFRCMDVDGDGVLSMYELEYFYEEQCER. D985, D987, D989, and E996 together coordinate Ca(2+). Positions 1105–1132 are disordered; that stretch reads AQFQEGFEDYETDEPASPSEFGNKSNKI.

As to quaternary structure, PP2A consists of a common heterodimeric core enzyme, composed of a 36 kDa catalytic subunit (subunit C) and a 65 kDa constant regulatory subunit (PR65 or subunit A), that associates with a variety of regulatory subunits. Proteins that associate with the core dimer include three families of regulatory subunits B (the R2/B/PR55/B55, R3/B''/PR72/PR130/PR59 and R5/B'/B56 families), the 48 kDa variable regulatory subunit, viral proteins, and cell signaling molecules. Expressed in heart, brain, placenta, lung, muscle and kidney.

In terms of biological role, the B regulatory subunit might modulate substrate selectivity and catalytic activity, and might also direct the localization of the catalytic enzyme to a particular subcellular compartment. This is Serine/threonine-protein phosphatase 2A regulatory subunit B'' subunit alpha (PPP2R3A) from Homo sapiens (Human).